A 374-amino-acid chain; its full sequence is 4-galactosyl-N-acetylglucosaminide 3-alpha-L-fucosyltransferase FUT5 (374 aa).

Topologically, residues 1-15 (MDPLGPAKPQWLWRR) are cytoplasmic. Residues 16–34 (CLAGLLFQLLVAVCFFSYL) traverse the membrane as a helical; Signal-anchor for type II membrane protein segment. Residues 35–374 (RVSQDHATGS…TVRSIAAWFT (340 aa)) are Lumenal-facing. N-linked (GlcNAc...) asparagine glycosylation is found at asparagine 60, asparagine 105, asparagine 167, and asparagine 198.

It belongs to the glycosyltransferase 10 family.

Its subcellular location is the golgi apparatus. The protein resides in the golgi stack membrane. The catalysed reaction is a beta-D-galactosyl-(1-&gt;3)-N-acetyl-beta-D-glucosaminyl derivative + GDP-beta-L-fucose = a beta-D-galactosyl-(1-&gt;3)-[alpha-L-fucosyl-(1-&gt;4)]-N-acetyl-beta-D-glucosaminyl derivative + GDP + H(+). The enzyme catalyses an N-acetyl-alpha-neuraminyl-(2-&gt;3)-beta-D-galactosyl-(1-&gt;4)-N-acetyl-beta-D-glucosaminyl derivative + GDP-beta-L-fucose = an alpha-Neu5Ac-(2-&gt;3)-beta-D-Gal-(1-&gt;4)-[alpha-L-Fuc-(1-&gt;3)]-beta-D-GlcNAc derivative + GDP + H(+). It carries out the reaction an alpha-Neu5Ac-(2-&gt;3)-beta-D-Gal-(1-&gt;4)-beta-D-GlcNAc-(1-&gt;3)-beta-D-Gal-(1-&gt;4)-[alpha-L-Fuc-(1-&gt;3)]-beta-D-GlcNAc derivative + GDP-beta-L-fucose = an alpha-Neu5Ac-(2-&gt;3)-beta-D-Gal-(1-&gt;4)-[alpha-L-Fuc-(1-&gt;3)]-beta-D-GlcNAc-(1-&gt;3)-beta-D-Gal-(1-&gt;4)-[alpha-L-Fuc-(1-&gt;3)]-beta-D-GlcNAc derivative + GDP + H(+). It catalyses the reaction a beta-D-galactosyl-(1-&gt;4)-N-acetyl-beta-D-glucosaminyl derivative + GDP-beta-L-fucose = a beta-D-galactosyl-(1-&gt;4)-[alpha-L-fucosyl-(1-&gt;3)]-N-acetyl-beta-D-glucosaminyl derivative + GDP + H(+). The catalysed reaction is a neolactoside nLc4Cer + GDP-beta-L-fucose = a neolactoside III(3)-alpha-Fuc-nLc4Cer + GDP + H(+). The enzyme catalyses a neolactoside nLc6Cer + GDP-beta-L-fucose = beta-D-galactosyl-(1-&gt;4)-N-acetyl-beta-D-glucosaminyl-(1-&gt;3)-beta-D-galactosyl-(1-&gt;4)-[alpha-L-fucosyl-(1-&gt;3)]-N-acetyl-beta-D-glucosaminyl-(1-&gt;3)-beta-D-galactosyl-(1-&gt;4)-beta-D-glucosyl-(1&lt;-&gt;1')-ceramide + GDP + H(+). It carries out the reaction a neolactoside nLc6Cer(d18:1(4E)) + GDP-beta-L-fucose = a neolactoside III(3)-alpha-Fuc-nLc6Cer(d18:1(4E)) + GDP + H(+). It catalyses the reaction a neolactoside nLc4Cer(d18:1(4E)) + GDP-beta-L-fucose = a neolactoside III(3)-alpha-Fuc-nLc4Cer(d18:1(4E)) + GDP + H(+). The catalysed reaction is a neolactoside VI(3)-alpha-NeuNAc-nLc6Cer + GDP-beta-L-fucose = a neolactoside VI(3)-alpha-NeuAc,III(3)-alphaFuc-nLc6Cer + GDP + H(+). The enzyme catalyses beta-D-galactosyl-(1-&gt;4)-N-acetyl-D-glucosamine + GDP-beta-L-fucose = beta-D-galactosyl-(1-&gt;4)-[alpha-L-fucosyl-(1-&gt;3)]-N-acetyl-D-glucosamine + GDP + H(+). It carries out the reaction N-acetyl-alpha-neuraminosyl-(2-&gt;3)-beta-D-galactosyl-(1-&gt;4)-N-acetyl-beta-D-glucosamine + GDP-beta-L-fucose = N-acetyl-alpha-neuraminosyl-(2-&gt;3)-beta-D-galactosyl-(1-&gt;4)-[alpha-L-fucosyl-(1-&gt;3)]-N-acetyl-beta-D-glucosamine + GDP + H(+). It catalyses the reaction alpha-L-Fuc-(1-&gt;2)-beta-D-Gal-(1-&gt;4)-D-GlcNAc + GDP-beta-L-fucose = alpha-L-Fuc-(1-&gt;2)-beta-D-Gal-(1-&gt;4)-[alpha-L-Fuc-(1-&gt;3)]-D-GlcNAc + GDP + H(+). The catalysed reaction is an alpha-Neu5Ac-(2-&gt;3)-beta-D-Gal-(1-&gt;3)-D-GlcNAc derivative + GDP-beta-L-fucose = an alpha-Neu5Ac-(2-&gt;3)-beta-D-Gal-(1-&gt;3)-[alpha-L-Fuc-(1-&gt;4)]-beta-D-GlcNAc derivative + GDP + H(+). The protein operates within protein modification; protein glycosylation. Catalyzes preferentially the transfer of L-fucose, from a guanosine diphosphate-beta-L-fucose, to the N-acetyl-beta-D-glucosamine (GlcNAc) of an N-acetyllactosamine unit (type 2 chain) of an oligosaccharide, or a glycoprotein- and a glycolipid-linked N-acetyllactosamine unit via an alpha (1,3) linkage and participates in the surface expression of VIM-2, Lewis X/SSEA-1 and sialyl Lewis X antigens. Preferentially transfers fucose to the GlcNAc of an internal N-acetyllactosamine unit of a poly-N-acetyllactosamine chain acceptor substrate. Also catalyzes to a lesser extend the transfer of L-fucose to the GlcNAc of a type 1 (beta-D-galactosyl-(1-&gt;3)-N-acetyl-beta-D-glucosaminyl) or H-type 1 (alpha-L-Fuc-(1-&gt;2)-beta-D-Gal-(1-&gt;3)-D-GlcNAc) chain oligosaccharide via an alpha (1,4) linkage. Preferentially catalyzes sialylated type 2 oligosaccharide acceptors over neutral type 2 or H type 2 (alpha-L-Fuc-(1-&gt;2)-beta-D-Gal-(1-&gt;4)-D-GlcNAc) oligosaccharide acceptors. Lactose-based structures are also acceptor substrates. This is 4-galactosyl-N-acetylglucosaminide 3-alpha-L-fucosyltransferase FUT5 from Gorilla gorilla gorilla (Western lowland gorilla).